The sequence spans 547 residues: Chaperonin GroEL (547 aa).

ATP is bound by residues 30 to 33 (TLGP), Lys51, 87 to 91 (DGTTT), Gly415, 479 to 481 (NAA), and Asp495.

The protein belongs to the chaperonin (HSP60) family. Forms a cylinder of 14 subunits composed of two heptameric rings stacked back-to-back. Interacts with the co-chaperonin GroES.

The protein localises to the cytoplasm. It carries out the reaction ATP + H2O + a folded polypeptide = ADP + phosphate + an unfolded polypeptide.. Together with its co-chaperonin GroES, plays an essential role in assisting protein folding. The GroEL-GroES system forms a nano-cage that allows encapsulation of the non-native substrate proteins and provides a physical environment optimized to promote and accelerate protein folding. The sequence is that of Chaperonin GroEL from Bordetella bronchiseptica (strain ATCC BAA-588 / NCTC 13252 / RB50) (Alcaligenes bronchisepticus).